We begin with the raw amino-acid sequence, 1134 residues long: Myosin-4 (1134 aa).

Positions 110–160 (REKLCVWCRVAANGQWHLGKIHSTSSSDDVCVMLSANDDVRTMEEIFPANP) constitute a Myosin N-terminal SH3-like domain. In terms of domain architecture, Myosin motor spans 164–830 (EGVEDLTQLS…VISVLEERKK (667 aa)). ATP contacts are provided by residues 255–262 (GESGAGKT) and 304–312 (NDNSSRFGK). Actin-binding stretches follow at residues 589–623 (LIEK…KQHL) and 710–732 (LFKL…KPNS). IQ domains lie at 832 to 861 (VLRG…AAVI), 855 to 884 (MRNA…SAIV), and 891 to 920 (ELDA…KNKP). The segment at 913-939 (STQQKNKPRNEKKKTRRKSTKRVSEDK) is disordered. The segment covering 918–933 (NKPRNEKKKTRRKSTK) has biased composition (basic residues). The stretch at 953-999 (LADLQSRVLKVEAAIMQKEDENTALQEELQRFEERWLENETRMKSME) forms a coiled coil.

Belongs to the TRAFAC class myosin-kinesin ATPase superfamily. Myosin family. Plant myosin class VIII subfamily. As to quaternary structure, homodimer.

Functionally, myosin heavy chain that is required for the cell cycle-regulated transport of various organelles and proteins for their segregation. Functions by binding with its tail domain to receptor proteins on organelles and exerting force with its N-terminal motor domain against actin filaments, thereby transporting its cargo along polarized actin cables. In Arabidopsis thaliana (Mouse-ear cress), this protein is Myosin-4 (VIII-B).